Reading from the N-terminus, the 1004-residue chain is 2-oxoglutarate dehydrogenase E1 component (1004 aa).

This sequence belongs to the alpha-ketoglutarate dehydrogenase family. In terms of assembly, homodimer. Part of the 2-oxoglutarate dehydrogenase (OGDH) complex composed of E1 (2-oxoglutarate dehydrogenase), E2 (dihydrolipoamide succinyltransferase) and E3 (dihydrolipoamide dehydrogenase); the complex contains multiple copies of the three enzymatic components (E1, E2 and E3). The cofactor is thiamine diphosphate.

The catalysed reaction is N(6)-[(R)-lipoyl]-L-lysyl-[protein] + 2-oxoglutarate + H(+) = N(6)-[(R)-S(8)-succinyldihydrolipoyl]-L-lysyl-[protein] + CO2. E1 component of the 2-oxoglutarate dehydrogenase (OGDH) complex which catalyzes the decarboxylation of 2-oxoglutarate, the first step in the conversion of 2-oxoglutarate to succinyl-CoA and CO(2). In Brucella abortus (strain S19), this protein is 2-oxoglutarate dehydrogenase E1 component.